The chain runs to 234 residues: Leucyl/phenylalanyl-tRNA--protein transferase (234 aa).

The protein belongs to the L/F-transferase family.

Its subcellular location is the cytoplasm. It catalyses the reaction N-terminal L-lysyl-[protein] + L-leucyl-tRNA(Leu) = N-terminal L-leucyl-L-lysyl-[protein] + tRNA(Leu) + H(+). It carries out the reaction N-terminal L-arginyl-[protein] + L-leucyl-tRNA(Leu) = N-terminal L-leucyl-L-arginyl-[protein] + tRNA(Leu) + H(+). The enzyme catalyses L-phenylalanyl-tRNA(Phe) + an N-terminal L-alpha-aminoacyl-[protein] = an N-terminal L-phenylalanyl-L-alpha-aminoacyl-[protein] + tRNA(Phe). Its function is as follows. Functions in the N-end rule pathway of protein degradation where it conjugates Leu, Phe and, less efficiently, Met from aminoacyl-tRNAs to the N-termini of proteins containing an N-terminal arginine or lysine. This chain is Leucyl/phenylalanyl-tRNA--protein transferase, found in Escherichia coli O45:K1 (strain S88 / ExPEC).